We begin with the raw amino-acid sequence, 97 residues long: Co-chaperonin GroES (97 aa).

Belongs to the GroES chaperonin family. As to quaternary structure, heptamer of 7 subunits arranged in a ring. Interacts with the chaperonin GroEL.

It localises to the cytoplasm. In terms of biological role, together with the chaperonin GroEL, plays an essential role in assisting protein folding. The GroEL-GroES system forms a nano-cage that allows encapsulation of the non-native substrate proteins and provides a physical environment optimized to promote and accelerate protein folding. GroES binds to the apical surface of the GroEL ring, thereby capping the opening of the GroEL channel. In Buchnera aphidicola subsp. Geoica urticularia, this protein is Co-chaperonin GroES.